Consider the following 827-residue polypeptide: Periplasmic nitrate reductase (827 aa).

The segment at residues 1-33 (MNLSRRDFMKANAAMAAATAAGLTIPVKNVVAA) is a signal peptide (tat-type signal). Residues 37-93 (IKWDKGVCRFCGTGCAVLVGTKDGRVVASQGDPDAEVNRGLNCIKGYFLPKIMYGKD) form the 4Fe-4S Mo/W bis-MGD-type domain. Residues Cys-44, Cys-47, Cys-51, and Cys-79 each coordinate [4Fe-4S] cluster. Residues Lys-81, Gln-148, Asn-173, Cys-177, 210-217 (WGSNMAEM), 241-245 (STYEH), 260-262 (QTD), Met-370, Gln-374, Asn-480, 506-507 (SD), Lys-529, Asp-556, and 716-725 (TGRVLEHWHT) each bind Mo-bis(molybdopterin guanine dinucleotide). Phe-792 lines the substrate pocket. Asn-800 and Lys-817 together coordinate Mo-bis(molybdopterin guanine dinucleotide).

It belongs to the prokaryotic molybdopterin-containing oxidoreductase family. NasA/NapA/NarB subfamily. Component of the periplasmic nitrate reductase NapAB complex composed of NapA and NapB. It depends on [4Fe-4S] cluster as a cofactor. Requires Mo-bis(molybdopterin guanine dinucleotide) as cofactor. In terms of processing, predicted to be exported by the Tat system. The position of the signal peptide cleavage has not been experimentally proven.

The protein resides in the periplasm. The catalysed reaction is 2 Fe(II)-[cytochrome] + nitrate + 2 H(+) = 2 Fe(III)-[cytochrome] + nitrite + H2O. Catalytic subunit of the periplasmic nitrate reductase complex NapAB. Receives electrons from NapB and catalyzes the reduction of nitrate to nitrite. The sequence is that of Periplasmic nitrate reductase from Haemophilus influenzae (strain PittEE).